A 252-amino-acid polypeptide reads, in one-letter code: 3-dehydroquinate dehydratase (252 aa).

Residues serine 21, 46–48 (EWR), and arginine 82 contribute to the 3-dehydroquinate site. The active-site Proton donor/acceptor is histidine 143. Residue lysine 170 is the Schiff-base intermediate with substrate of the active site. The 3-dehydroquinate site is built by arginine 213, serine 232, and glutamine 236.

Belongs to the type-I 3-dehydroquinase family. In terms of assembly, homodimer.

The catalysed reaction is 3-dehydroquinate = 3-dehydroshikimate + H2O. It functions in the pathway metabolic intermediate biosynthesis; chorismate biosynthesis; chorismate from D-erythrose 4-phosphate and phosphoenolpyruvate: step 3/7. Involved in the third step of the chorismate pathway, which leads to the biosynthesis of aromatic amino acids. Catalyzes the cis-dehydration of 3-dehydroquinate (DHQ) and introduces the first double bond of the aromatic ring to yield 3-dehydroshikimate. The polypeptide is 3-dehydroquinate dehydratase (Salmonella dublin (strain CT_02021853)).